Consider the following 1912-residue polypeptide: Receptor-type tyrosine-protein phosphatase delta (1912 aa).

A signal peptide spans 1-20; the sequence is MVPVARPLSLLLTFFLCACA. Topologically, residues 21 to 1266 are extracellular; that stretch reads ETPPRFTRTP…PQPITDEEEG (1246 aa). Ig-like C2-type domains are found at residues 24-114 and 126-224; these read PRFT…TRLT and PTID…ANLY. 2 disulfide bridges follow: Cys45-Cys98 and Cys147-Cys207. Residues 181 to 189 are mini-exon peptide A9; sufficient for interaction with IL1RAPL1; sequence ESIGGTPIR. The mini-exon peptide B; required for interaction with SLITRK2 and in the function in pre-synaptic differentiation; Acts as an adjustable linker to control relative positions and orientations of the PTPRD second and third immunoglobilin domains for their simultaneous interactions with the first immunoglobilin domain of IL1RAPL1 and IL1RAP; Modulates affinity for IL1RAPL1 and IL1RAP stretch occupies residues 227 to 230; it reads ELRE. The Ig-like C2-type 3 domain occupies 236–318; sequence PRFSIPPTNH…GVIEAIAQIT (83 aa). Asn254 and Asn299 each carry an N-linked (GlcNAc...) asparagine glycan. An intrachain disulfide couples Cys257 to Cys302. Fibronectin type-III domains are found at residues 325-415, 420-516, 518-607, 612-709, 714-822, 823-916, 921-1016, and 1020-1106; these read PPGT…TSEQ, APRD…TGVP, QPLN…TMQS, PPQD…TDED, PPRK…TTGA, VPGK…VPEE, FPQN…TLPV, and FAKN…TAPD. Asn724 and Asn832 each carry an N-linked (GlcNAc...) asparagine glycan. Residues 1267 to 1287 form a helical membrane-spanning segment; that stretch reads LIWVVGPVLAVVFIICIVIAI. The Cytoplasmic portion of the chain corresponds to 1288–1912; sequence LLYKRKRAES…YLGSFDHYAT (625 aa). A disordered region spans residues 1298 to 1319; that stretch reads ESRKSSLPNSKEVPSHHPTDPV. Basic and acidic residues predominate over residues 1310 to 1319; sequence VPSHHPTDPV. 2 consecutive Tyrosine-protein phosphatase domains span residues 1357–1612 and 1644–1903; these read FSQE…LLEA and MELE…ALEY. Substrate contacts are provided by residues Asp1521, 1553–1559, and Gln1597; that span reads CSAGVGR. Cys1553 (phosphocysteine intermediate) is an active-site residue. The active-site Phosphocysteine intermediate is Cys1844.

It belongs to the protein-tyrosine phosphatase family. Receptor class 2A subfamily. In terms of assembly, interacts with PPFIA1, PPFIA2 and PPFIA3. Interacts (via extracellular domain) with SLITRK4 (via LRR 1 and 2 repeats). Interacts with SLITRK2; induces presynaptic differentiation. Interacts (via the second immunoglobilin domain) with IL1RAPL1 (via the first immunoglobilin domain); induces pre- and postsynaptic differentiation of neurons and synapse formation. Isoform G, isoform H, isoform I, isoform J, and isoform K do not interact with IL1RAPL1. Interacts (via the third immunoglobilin domain) with IL1RAP (via the first immunoglobilin domain); induces pre- and postsynaptic differentiation of neurons. Post-translationally, a cleavage occurs, separating the extracellular domain from the transmembrane segment. This process called 'ectodomain shedding' is thought to be involved in receptor desensitization, signal transduction and/or membrane localization. In terms of tissue distribution, brain, kidney, heart, and some B-cell lines.

The protein localises to the membrane. The enzyme catalyses O-phospho-L-tyrosyl-[protein] + H2O = L-tyrosyl-[protein] + phosphate. Can bidirectionally induce pre- and post-synaptic differentiation of neurons by mediating interaction with IL1RAP and IL1RAPL1 trans-synaptically. Involved in pre-synaptic differentiation through interaction with SLITRK2. The chain is Receptor-type tyrosine-protein phosphatase delta (Ptprd) from Mus musculus (Mouse).